The following is a 394-amino-acid chain: Probable malate--CoA ligase subunit beta (394 aa).

Positions 9–244 (KELLARHGVH…KSQEDPRETF (236 aa)) constitute an ATP-grasp domain. Positions 46, 99, 102, and 107 each coordinate ATP. Mg(2+) contacts are provided by Asn199 and Asp213.

This sequence belongs to the succinate/malate CoA ligase beta subunit family. As to quaternary structure, heterotetramer of two alpha and two beta subunits. Mg(2+) is required as a cofactor.

It catalyses the reaction (S)-malate + ATP + CoA = (S)-malyl-CoA + ADP + phosphate. The protein operates within one-carbon metabolism; formaldehyde assimilation via serine pathway. The chain is Probable malate--CoA ligase subunit beta (mtkA) from Mesorhizobium japonicum (strain LMG 29417 / CECT 9101 / MAFF 303099) (Mesorhizobium loti (strain MAFF 303099)).